A 245-amino-acid chain; its full sequence is uncharacterized protein (245 aa).

Residues 33–176 (QRAAYQQVQA…SSQRDMLTAT (144 aa)) adopt a coiled-coil conformation.

This is an uncharacterized protein from Mycobacterium tuberculosis (strain CDC 1551 / Oshkosh).